Here is a 585-residue protein sequence, read N- to C-terminus: Protein-lysine N-methyltransferase EFM1 (585 aa).

One can recognise an SET domain in the interval 23–281 (PKISFRITED…AQDELFNNYG (259 aa)). Y280 is an S-adenosyl-L-methionine binding site.

It belongs to the class V-like SAM-binding methyltransferase superfamily. RKM1 family.

It is found in the cytoplasm. Its function is as follows. S-adenosyl-L-methionine-dependent protein-lysine N-methyltransferase that monomethylates elongation factor 1-alpha (TEF1/TEF2) at 'Lys-30'. This is Protein-lysine N-methyltransferase EFM1 from Saccharomyces cerevisiae (strain ATCC 204508 / S288c) (Baker's yeast).